The following is an 892-amino-acid chain: Translation initiation factor IF-2 (892 aa).

Residues lysine 88–glutamine 306 form a disordered region. Basic and acidic residues-rich tracts occupy residues valine 93–valine 159 and aspartate 166–lysine 216. Positions glycine 254–lysine 269 are enriched in basic residues. A compositionally biased stretch (basic and acidic residues) spans histidine 270–alanine 282. Residues proline 391–lysine 560 form the tr-type G domain. The tract at residues glycine 400–threonine 407 is G1. Glycine 400 to threonine 407 contributes to the GTP binding site. The G2 stretch occupies residues glycine 425–histidine 429. Positions aspartate 446–glycine 449 are G3. GTP contacts are provided by residues aspartate 446–histidine 450 and asparagine 500–aspartate 503. The interval asparagine 500–aspartate 503 is G4. The tract at residues serine 536–lysine 538 is G5.

This sequence belongs to the TRAFAC class translation factor GTPase superfamily. Classic translation factor GTPase family. IF-2 subfamily.

The protein localises to the cytoplasm. One of the essential components for the initiation of protein synthesis. Protects formylmethionyl-tRNA from spontaneous hydrolysis and promotes its binding to the 30S ribosomal subunits. Also involved in the hydrolysis of GTP during the formation of the 70S ribosomal complex. This Salmonella schwarzengrund (strain CVM19633) protein is Translation initiation factor IF-2.